We begin with the raw amino-acid sequence, 95 residues long: Protein YY1 (95 aa).

The first 26 residues, Met-1 to Ala-26, serve as a signal peptide directing secretion. Disulfide bonds link Cys-31–Cys-72, Cys-41–Cys-61, Cys-62–Cys-87, and Cys-74–Cys-94.

Belongs to the A9/FIL1 family. As to expression, anther.

It is found in the secreted. The polypeptide is Protein YY1 (Oryza sativa subsp. japonica (Rice)).